A 215-amino-acid chain; its full sequence is UPF0323 lipoprotein jhp_0217 (215 aa).

Residues methionine 1 to glycine 27 form the signal peptide. Cysteine 28 carries N-palmitoyl cysteine lipidation. The S-diacylglycerol cysteine moiety is linked to residue cysteine 28. The span at glutamine 158–arginine 169 shows a compositional bias: polar residues. The disordered stretch occupies residues glutamine 158–alanine 215. The span at serine 170–serine 183 shows a compositional bias: low complexity. Over residues methionine 184–phenylalanine 195 the composition is skewed to polar residues. The span at serine 197–serine 208 shows a compositional bias: low complexity.

This sequence belongs to the UPF0323 family.

Its subcellular location is the cell membrane. This Helicobacter pylori (strain J99 / ATCC 700824) (Campylobacter pylori J99) protein is UPF0323 lipoprotein jhp_0217.